A 280-amino-acid polypeptide reads, in one-letter code: MVARRRKRAARDPEDRIPSPLGYAAIPIKFSEKQQASHYLYVRAHSVRQGTKSTWPQKRTLFVLNVPPYCTEESLSRLLSSCGPLQSVELQEKPDLADSPKESRSKFFHPKPVPGFRVGYVVFQKPSGVSAALALQGPLLVSTESHPVKTGIHKWISDYADSVPDPEALRVEVDTFMEAYDQKIAEEEAKAKEEEGVPDEEGWVKVTRRGRRPVLPRTEAASLRVLERERRKRTRKELLNFYAWQHRESKMEHLAQLRKKFEEDKQRIELLRAQRKFRPY.

Positions 59-159 (RTLFVLNVPP…TGIHKWISDY (101 aa)) constitute an RRM domain. Phosphoserine is present on Ser99.

The protein belongs to the RRP7 family. As to quaternary structure, part of the small subunit (SSU) processome, composed of more than 70 proteins and the RNA chaperone small nucleolar RNA (snoRNA) U3. Interacts with NOL6; required for NOL6 localization to nucleolus.

It is found in the nucleus. Its subcellular location is the nucleolus. The protein resides in the cell projection. It localises to the cilium. The protein localises to the cytoplasm. It is found in the cytoskeleton. Its subcellular location is the microtubule organizing center. The protein resides in the centrosome. In terms of biological role, nucleolar protein that is involved in ribosomal RNA (rRNA) processing. Also plays a role in primary cilia resorption, and cell cycle progression in neurogenesis and neocortex development. Part of the small subunit (SSU) processome, first precursor of the small eukaryotic ribosomal subunit. During the assembly of the SSU processome in the nucleolus, many ribosome biogenesis factors, an RNA chaperone and ribosomal proteins associate with the nascent pre-rRNA and work in concert to generate RNA folding, modifications, rearrangements and cleavage as well as targeted degradation of pre-ribosomal RNA by the RNA exosome. The polypeptide is Ribosomal RNA-processing protein 7 homolog A (RRP7A) (Pongo abelii (Sumatran orangutan)).